We begin with the raw amino-acid sequence, 59 residues long: Large ribosomal subunit protein uL30 (59 aa).

It belongs to the universal ribosomal protein uL30 family. In terms of assembly, part of the 50S ribosomal subunit.

In Persephonella marina (strain DSM 14350 / EX-H1), this protein is Large ribosomal subunit protein uL30.